A 272-amino-acid chain; its full sequence is NADPH-dependent 7-cyano-7-deazaguanine reductase (272 aa).

Substrate is bound at residue 80–82 (VES). Residue 82 to 83 (SK) coordinates NADPH. Cys-178 serves as the catalytic Thioimide intermediate. The active-site Proton donor is the Asp-185. 217 to 218 (AE) contributes to the substrate binding site. 246-247 (RG) contributes to the NADPH binding site.

The protein belongs to the GTP cyclohydrolase I family. QueF type 2 subfamily. As to quaternary structure, homodimer.

The protein localises to the cytoplasm. The enzyme catalyses 7-aminomethyl-7-carbaguanine + 2 NADP(+) = 7-cyano-7-deazaguanine + 2 NADPH + 3 H(+). It participates in tRNA modification; tRNA-queuosine biosynthesis. Functionally, catalyzes the NADPH-dependent reduction of 7-cyano-7-deazaguanine (preQ0) to 7-aminomethyl-7-deazaguanine (preQ1). The protein is NADPH-dependent 7-cyano-7-deazaguanine reductase of Rickettsia typhi (strain ATCC VR-144 / Wilmington).